A 239-amino-acid polypeptide reads, in one-letter code: Probable transcriptional regulatory protein Sca_0317 (239 aa).

The protein belongs to the TACO1 family. YeeN subfamily.

Its subcellular location is the cytoplasm. The sequence is that of Probable transcriptional regulatory protein Sca_0317 from Staphylococcus carnosus (strain TM300).